A 390-amino-acid chain; its full sequence is Methylthioribose-1-phosphate isomerase (390 aa).

Substrate is bound by residues 53-55 (RGA), Arg-90, and Gln-207. The active-site Proton donor is Asp-248. 258 to 259 (NK) lines the substrate pocket.

This sequence belongs to the EIF-2B alpha/beta/delta subunits family. MtnA subfamily.

The catalysed reaction is 5-(methylsulfanyl)-alpha-D-ribose 1-phosphate = 5-(methylsulfanyl)-D-ribulose 1-phosphate. The enzyme catalyses 5-deoxy-alpha-D-ribose 1-phosphate = 5-deoxy-D-ribulose 1-phosphate. It functions in the pathway amino-acid biosynthesis; L-methionine biosynthesis via salvage pathway; L-methionine from S-methyl-5-thio-alpha-D-ribose 1-phosphate: step 1/6. In terms of biological role, catalyzes the interconversion of methylthioribose-1-phosphate (MTR-1-P) into methylthioribulose-1-phosphate (MTRu-1-P). Also catalyzes the interconversion of 5-deoxyribose 1-phosphate and 5-deoxyribulose 1-phosphate. Part of a bifunctional DHAP-shunt salvage pathway for SAM by-products. The sequence is that of Methylthioribose-1-phosphate isomerase from Rhodospirillum rubrum (strain ATCC 11170 / ATH 1.1.1 / DSM 467 / LMG 4362 / NCIMB 8255 / S1).